A 192-amino-acid polypeptide reads, in one-letter code: Large ribosomal subunit protein uL6 (192 aa).

It belongs to the universal ribosomal protein uL6 family. In terms of assembly, component of the large ribosomal subunit.

The protein localises to the cytoplasm. Functionally, component of the large ribosomal subunit. The ribosome is a large ribonucleoprotein complex responsible for the synthesis of proteins in the cell. The sequence is that of Large ribosomal subunit protein uL6 (rpl9) from Ictalurus punctatus (Channel catfish).